Consider the following 351-residue polypeptide: Photosystem II D2 protein (351 aa).

The helical transmembrane segment at 39 to 59 (TSYLSIGGWFTGTTFVTSWYT) threads the bilayer. Histidine 116 provides a ligand contact to chlorophyll a. Residues 123-139 (GFCLRQFEIARLVGIRP) traverse the membrane as a helical segment. Glutamine 128 and asparagine 141 together coordinate pheophytin a. A helical transmembrane segment spans residues 151 to 164 (IFVSVFLMYPLGQA). Histidine 196 is a binding site for chlorophyll a. The helical transmembrane segment at 206–226 (AALLCAIHGATVQNTIFEDGD) threads the bilayer. Positions 213 and 260 each coordinate a plastoquinone. Fe cation is bound at residue histidine 213. Histidine 267 provides a ligand contact to Fe cation. Residues 277 to 293 (GLWTSAIGIVGLALNLR) traverse the membrane as a helical segment.

It belongs to the reaction center PufL/M/PsbA/D family. PSII is composed of 1 copy each of membrane proteins PsbA, PsbB, PsbC, PsbD, PsbE, PsbF, PsbH, PsbI, PsbJ, PsbK, PsbL, PsbM, PsbT, PsbX, PsbY, PsbZ, Psb30/Ycf12, at least 3 peripheral proteins of the oxygen-evolving complex and a large number of cofactors. It forms dimeric complexes. The cofactor is The D1/D2 heterodimer binds P680, chlorophylls that are the primary electron donor of PSII, and subsequent electron acceptors. It shares a non-heme iron and each subunit binds pheophytin, quinone, additional chlorophylls, carotenoids and lipids. There is also a Cl(-1) ion associated with D1 and D2, which is required for oxygen evolution. The PSII complex binds additional chlorophylls, carotenoids and specific lipids..

Its subcellular location is the plastid. It localises to the chloroplast thylakoid membrane. The catalysed reaction is 2 a plastoquinone + 4 hnu + 2 H2O = 2 a plastoquinol + O2. Photosystem II (PSII) is a light-driven water:plastoquinone oxidoreductase that uses light energy to abstract electrons from H(2)O, generating O(2) and a proton gradient subsequently used for ATP formation. It consists of a core antenna complex that captures photons, and an electron transfer chain that converts photonic excitation into a charge separation. The D1/D2 (PsbA/PsbD) reaction center heterodimer binds P680, the primary electron donor of PSII as well as several subsequent electron acceptors. D2 is needed for assembly of a stable PSII complex. The protein is Photosystem II D2 protein of Guillardia theta (Cryptophyte).